A 392-amino-acid chain; its full sequence is Digeranylgeranylglycerophospholipid reductase (392 aa).

FAD contacts are provided by G15, E34, C45, A46, G48, R99, A123, D279, G291, and I292. Residue V370 participates in a 2,3-bis-O-(geranylgeranyl)-sn-glycerol 1-phospholipid binding.

The protein belongs to the geranylgeranyl reductase family. DGGGPL reductase subfamily. The cofactor is FAD.

The enzyme catalyses a 2,3-bis-O-phytanyl-sn-glycerol 1-phospholipid + 8 oxidized 2[4Fe-4S]-[ferredoxin] = a 2,3-bis-O-(geranylgeranyl)-sn-glycerol 1-phospholipid + 8 reduced 2[4Fe-4S]-[ferredoxin] + 16 H(+). It carries out the reaction 2,3-bis-O-(phytanyl)-sn-glycerol 1-phosphate + 8 oxidized 2[4Fe-4S]-[ferredoxin] = 2,3-bis-O-(geranylgeranyl)-sn-glycerol 1-phosphate + 8 reduced 2[4Fe-4S]-[ferredoxin] + 16 H(+). It catalyses the reaction a 2,3-bis-O-phytanyl-sn-glycerol 1-phospholipid + 8 A = a 2,3-bis-O-(geranylgeranyl)-sn-glycerol 1-phospholipid + 8 AH2. The catalysed reaction is CDP-2,3-bis-O-(geranylgeranyl)-sn-glycerol + 8 AH2 = CDP-2,3-bis-O-(phytanyl)-sn-glycerol + 8 A. The enzyme catalyses archaetidylserine + 8 AH2 = 2,3-bis-O-phytanyl-sn-glycero-3-phospho-L-serine + 8 A. The protein operates within membrane lipid metabolism; glycerophospholipid metabolism. In terms of biological role, is involved in the reduction of 2,3-digeranylgeranylglycerophospholipids (unsaturated archaeols) into 2,3-diphytanylglycerophospholipids (saturated archaeols) in the biosynthesis of archaeal membrane lipids. Catalyzes the formation of archaetidic acid (2,3-di-O-phytanyl-sn-glyceryl phosphate) from 2,3-di-O-geranylgeranylglyceryl phosphate (DGGGP) via the hydrogenation of each double bond of the isoprenoid chains. Is also probably able to reduce double bonds of geranyl groups in CDP-2,3-bis-O-(geranylgeranyl)-sn-glycerol and archaetidylserine, thus acting at various stages in the biosynthesis of archaeal membrane lipids. The chain is Digeranylgeranylglycerophospholipid reductase from Methanocella arvoryzae (strain DSM 22066 / NBRC 105507 / MRE50).